Here is a 197-residue protein sequence, read N- to C-terminus: A-type ATP synthase subunit E (197 aa).

It belongs to the V-ATPase E subunit family. In terms of assembly, has multiple subunits with at least A(3), B(3), C, D, E, F, H, I and proteolipid K(x).

The protein localises to the cell membrane. Functionally, component of the A-type ATP synthase that produces ATP from ADP in the presence of a proton gradient across the membrane. In Thermococcus gammatolerans (strain DSM 15229 / JCM 11827 / EJ3), this protein is A-type ATP synthase subunit E.